Consider the following 107-residue polypeptide: uncharacterized protein (107 aa).

The protein belongs to the HesB/IscA family.

This is an uncharacterized protein from Azotobacter vinelandii.